Here is a 1235-residue protein sequence, read N- to C-terminus: ATP-dependent DNA helicase mph1 (1235 aa).

Disordered regions lie at residues Leu-20–His-78 and Asp-96–Pro-148. Residues Ser-61–Lys-72 show a composition bias toward basic and acidic residues. Residues Ala-137–Pro-148 show a composition bias toward polar residues. In terms of domain architecture, Helicase ATP-binding spans Ile-272–Glu-440. Residue Leu-285–Thr-292 participates in ATP binding. Positions Asp-388–His-391 match the DEAH box motif. In terms of domain architecture, Helicase C-terminal spans Lys-608–Leu-784. 3 disordered regions span residues Asn-808–Leu-827, Ser-944–Met-1117, and Thr-1144–Glu-1235. The segment covering Gln-947 to Gly-958 has biased composition (basic and acidic residues). Residues Val-1015 to Ala-1027 show a composition bias toward basic residues. Positions Pro-1065–Asp-1074 are enriched in basic and acidic residues. Positions Met-1075–Asp-1085 are enriched in acidic residues. Polar residues-rich tracts occupy residues Pro-1095–Pro-1114 and Ala-1146–Glu-1159. Over residues Ser-1160 to Asp-1170 the composition is skewed to low complexity. Residues Pro-1194 to Met-1209 are compositionally biased toward polar residues.

The protein belongs to the DEAD box helicase family. DEAH subfamily. FANCM sub-subfamily. In terms of assembly, interacts with the MHF histone-fold complex to form the FANCM-MHF complex.

The protein localises to the nucleus. The enzyme catalyses ATP + H2O = ADP + phosphate + H(+). Its function is as follows. ATP-dependent DNA helicase involved in DNA damage repair by homologous recombination and in genome maintenance. Capable of unwinding D-loops. Plays a role in limiting crossover recombinants during mitotic DNA double-strand break (DSB) repair. Component of a FANCM-MHF complex which promotes gene conversion at blocked replication forks, probably by reversal of the stalled fork. This is ATP-dependent DNA helicase mph1 from Sclerotinia sclerotiorum (strain ATCC 18683 / 1980 / Ss-1) (White mold).